Here is a 295-residue protein sequence, read N- to C-terminus: Bifunctional protein FolD (295 aa).

Residues 169-171, Ser-194, and Ile-235 each bind NADP(+); that span reads GRS.

The protein belongs to the tetrahydrofolate dehydrogenase/cyclohydrolase family. Homodimer.

It carries out the reaction (6R)-5,10-methylene-5,6,7,8-tetrahydrofolate + NADP(+) = (6R)-5,10-methenyltetrahydrofolate + NADPH. The catalysed reaction is (6R)-5,10-methenyltetrahydrofolate + H2O = (6R)-10-formyltetrahydrofolate + H(+). Its pathway is one-carbon metabolism; tetrahydrofolate interconversion. Catalyzes the oxidation of 5,10-methylenetetrahydrofolate to 5,10-methenyltetrahydrofolate and then the hydrolysis of 5,10-methenyltetrahydrofolate to 10-formyltetrahydrofolate. This chain is Bifunctional protein FolD, found in Acaryochloris marina (strain MBIC 11017).